The sequence spans 340 residues: UDP-N-acetylglucosamine--N-acetylmuramyl-(pentapeptide) pyrophosphoryl-undecaprenol N-acetylglucosamine transferase (340 aa).

Residues 15–17 (TGG), asparagine 127, serine 184, isoleucine 230, and glutamine 275 each bind UDP-N-acetyl-alpha-D-glucosamine.

It belongs to the glycosyltransferase 28 family. MurG subfamily.

The protein localises to the cell inner membrane. The enzyme catalyses di-trans,octa-cis-undecaprenyl diphospho-N-acetyl-alpha-D-muramoyl-L-alanyl-D-glutamyl-meso-2,6-diaminopimeloyl-D-alanyl-D-alanine + UDP-N-acetyl-alpha-D-glucosamine = di-trans,octa-cis-undecaprenyl diphospho-[N-acetyl-alpha-D-glucosaminyl-(1-&gt;4)]-N-acetyl-alpha-D-muramoyl-L-alanyl-D-glutamyl-meso-2,6-diaminopimeloyl-D-alanyl-D-alanine + UDP + H(+). The protein operates within cell wall biogenesis; peptidoglycan biosynthesis. Cell wall formation. Catalyzes the transfer of a GlcNAc subunit on undecaprenyl-pyrophosphoryl-MurNAc-pentapeptide (lipid intermediate I) to form undecaprenyl-pyrophosphoryl-MurNAc-(pentapeptide)GlcNAc (lipid intermediate II). The protein is UDP-N-acetylglucosamine--N-acetylmuramyl-(pentapeptide) pyrophosphoryl-undecaprenol N-acetylglucosamine transferase of Vesicomyosocius okutanii subsp. Calyptogena okutanii (strain HA).